A 513-amino-acid chain; its full sequence is Glycerol-3-phosphate dehydrogenase (513 aa).

16–44 (DVAVIGGGINGVGIAADAAGRGLSVFLCE) contacts FAD.

This sequence belongs to the FAD-dependent glycerol-3-phosphate dehydrogenase family. It depends on FAD as a cofactor.

It localises to the cytoplasm. The enzyme catalyses a quinone + sn-glycerol 3-phosphate = dihydroxyacetone phosphate + a quinol. The sequence is that of Glycerol-3-phosphate dehydrogenase (glpD) from Pseudomonas tolaasii.